We begin with the raw amino-acid sequence, 841 residues long: Microcephalin (841 aa).

Positions 1 to 93 constitute a BRCT 1 domain; the sequence is MAAPILKDVV…AHIDESLFPA (93 aa). Phosphoserine is present on residues serine 278, serine 286, serine 295, and serine 332. Threonine 334 carries the post-translational modification Phosphothreonine. 4 disordered regions span residues 340–375, 417–445, 481–507, and 562–593; these read GHLL…RKRS, PDNL…SCRS, SSPQ…SAPE, and VGLK…PRSV. Basic residues predominate over residues 342 to 358; the sequence is LLIHSRPRSSSVKRKRV. Over residues 433–445 the composition is skewed to polar residues; sequence QLPSSPAQFSCRS. The span at 565–583 shows a compositional bias: polar residues; sequence KSTQDKGTTSKISNSSEGE. 2 consecutive BRCT domains span residues 646–736 and 757–839; these read SGKG…SFEL and YRGT…NYLL.

As to quaternary structure, interacts with CDC27 and maybe other components of the APC/C complex. Interacts with histone variant H2AX under DNA damage conditions.

The protein resides in the cytoplasm. It localises to the cytoskeleton. It is found in the microtubule organizing center. Its subcellular location is the centrosome. Functionally, implicated in chromosome condensation and DNA damage induced cellular responses. May play a role in neurogenesis and regulation of the size of the cerebral cortex. In Colobus guereza (Mantled guereza), this protein is Microcephalin.